A 261-amino-acid polypeptide reads, in one-letter code: MFEARLVQGSILKKVLEALKDLINEACWDISSGGVNLQSMDSSHVSLVQLTLRSEGFDTYRCDRNLAMGVNLTSMSKILKCAGNEDIITLRAEDNADTLALVFEAPNQEKVSDYEMKLMDLDVEQLGIPEQEYSCVVKMPSGEFARICRDLSHIGDAVVISCAKDGVKFSASGELGNGNIKLSQTSNVDKEEEAVTIEMNEPVQLTFALRYLNFFTKATPLSPTVTLSMSTDVPLVVEYKISDMGHLKYYLAPKIEDEEGS.

N6-acetyllysine occurs at positions 14, 77, and 80. A DNA-binding region spans residues 61–80 (RCDRNLAMGVNLTSMSKILK). A disulfide bridge links Cys135 with Cys162. Residue Lys164 forms a Glycyl lysine isopeptide (Lys-Gly) (interchain with G-Cter in SUMO2); alternate linkage. Lys164 participates in a covalent cross-link: Glycyl lysine isopeptide (Lys-Gly) (interchain with G-Cter in ubiquitin); alternate. The residue at position 211 (Tyr211) is a Phosphotyrosine; by EGFR. At Lys248 the chain carries N6-acetyllysine. Residue Lys254 forms a Glycyl lysine isopeptide (Lys-Gly) (interchain with G-Cter in SUMO2) linkage.

This sequence belongs to the PCNA family. As to quaternary structure, homotrimer. Interacts with p300/EP300; the interaction occurs on chromatin in UV-irradiated damaged cells. Interacts with CREBBP (via transactivation domain and C-terminus); the interaction occurs on chromatin in UV-irradiated damaged cells. Directly interacts with POLD1, POLD3 and POLD4 subunits of the DNA polymerase delta complex, POLD3 being the major interacting partner; the interaction with POLD3 is inhibited by CDKN1A/p21(CIP1). Forms a complex with activator 1 heteropentamer in the presence of ATP. Interacts with EXO1, POLH, POLK, DNMT1, ERCC5, FEN1, CDC6 and POLDIP2. Interacts with POLB. Interacts with APEX2; this interaction is triggered by reactive oxygen species and increased by misincorporation of uracil in nuclear DNA. Forms a ternary complex with DNTTIP2 and core histone. Interacts with KCTD10 and PPP1R15A. Interacts with SMARCA5/SNF2H. Interacts with BAZ1B/WSTF; the interaction is direct and is required for BAZ1B/WSTF binding to replication foci during S phase. Interacts with HLTF and SHPRH. Interacts with NUDT15; this interaction is disrupted in response to UV irradiation and acetylation. Interacts with CDKN1A/p21(CIP1) and CDT1; interacts via their PIP-box which also recruits the DCX(DTL) complex. The interaction with CDKN1A inhibits POLD3 binding. Interacts with DDX11. Interacts with EGFR; positively regulates PCNA. Interacts with PARPBP. Interacts (when ubiquitinated) with SPRTN; leading to enhance RAD18-mediated PCNA ubiquitination. Interacts (when polyubiquitinated) with ZRANB3. Interacts with SMARCAD1. Interacts with CDKN1C. Interacts with PCLAF (via PIP-box). Interacts with RTEL1 (via PIP-box); the interaction is direct and essential for the suppression of telomere fragility. Interacts with FAM111A (via PIP-box); the interaction is direct and required for PCNA loading on chromatin binding. Interacts with LIG1. Interacts with SETMAR. Interacts with ANKRD17. Interacts with FBXO18/FBH1 (via PIP-box); the interaction recruits the DCX(DTL) complex and promotes ubiquitination and degradation of FBXO18/FBH1. Interacts with POLN. Interacts with SDE2 (via PIP-box); the interaction is direct and prevents ultraviolet light induced monoubiquitination. Component of the replisome complex composed of at least DONSON, MCM2, MCM7, PCNA and TICRR; interaction at least with PCNA occurs during DNA replication. Interacts with MAPK15; the interaction is chromatin binding dependent and prevents MDM2-mediated PCNA destruction by inhibiting the association of PCNA with MDM2. Interacts with PARP10 (via PIP-box). Interacts with DDI2. Interacts with HMCES (via PIP-box). Interacts with TRAIP (via PIP-box). Interacts with UHRF2. Interacts with ALKBH2; this interaction is enhanced during the S-phase of the cell cycle. Interacts with ATAD5; the interaction promotes USP1-mediated PCNA deubiquitination. Interacts (when phosphorylated) with GRB2. Interacts with ANG. Interacts with nuclear UNG; this interaction mediates UNG recruitment to S-phase replication foci. Interacts with ERCC6L2 (via an atypical PIP-box); this interaction facilitates cenrtomeric localization of ERCC6L2. In terms of processing, phosphorylated. Phosphorylation at Tyr-211 by EGFR stabilizes chromatin-associated PCNA. Post-translationally, acetylated by CREBBP and p300/EP300; preferentially acetylated by CREBBP on Lys-80, Lys-13 and Lys-14 and on Lys-77 by p300/EP300 upon loading on chromatin in response to UV irradiation. Lysine acetylation disrupts association with chromatin, hence promoting PCNA ubiquitination and proteasomal degradation in response to UV damage in a CREBBP- and EP300-dependent manner. Acetylation disrupts interaction with NUDT15 and promotes degradation. Ubiquitinated. Following DNA damage, can be either monoubiquitinated to stimulate direct bypass of DNA lesions by specialized DNA polymerases or polyubiquitinated to promote recombination-dependent DNA synthesis across DNA lesions by template switching mechanisms. Following induction of replication stress, monoubiquitinated by the UBE2B-RAD18 complex on Lys-164, leading to recruit translesion (TLS) polymerases, which are able to synthesize across DNA lesions in a potentially error-prone manner. An error-free pathway also exists and requires non-canonical polyubiquitination on Lys-164 through 'Lys-63' linkage of ubiquitin moieties by the E2 complex UBE2N-UBE2V2 and the E3 ligases, HLTF, RNF8 and SHPRH. This error-free pathway, also known as template switching, employs recombination mechanisms to synthesize across the lesion, using as a template the undamaged, newly synthesized strand of the sister chromatid. Monoubiquitination at Lys-164 also takes place in undamaged proliferating cells, and is mediated by the DCX(DTL) complex, leading to enhance PCNA-dependent translesion DNA synthesis. Sumoylated during S phase. In terms of processing, methylated on glutamate residues by ARMT1.

The protein resides in the nucleus. Functionally, auxiliary protein of DNA polymerase delta and epsilon, is involved in the control of eukaryotic DNA replication by increasing the polymerase's processibility during elongation of the leading strand. Induces a robust stimulatory effect on the 3'-5' exonuclease and 3'-phosphodiesterase, but not apurinic-apyrimidinic (AP) endonuclease, APEX2 activities. Has to be loaded onto DNA in order to be able to stimulate APEX2. Plays a key role in DNA damage response (DDR) by being conveniently positioned at the replication fork to coordinate DNA replication with DNA repair and DNA damage tolerance pathways. Acts as a loading platform to recruit DDR proteins that allow completion of DNA replication after DNA damage and promote postreplication repair: Monoubiquitinated PCNA leads to recruitment of translesion (TLS) polymerases, while 'Lys-63'-linked polyubiquitination of PCNA is involved in error-free pathway and employs recombination mechanisms to synthesize across the lesion. The protein is Proliferating cell nuclear antigen (PCNA) of Cricetulus griseus (Chinese hamster).